A 270-amino-acid chain; its full sequence is Undecaprenyl-diphosphatase (270 aa).

The next 8 helical transmembrane spans lie at 1-21 (MDLF…FLPI), 39-59 (QGLV…MLYF), 87-107 (SHLV…GLAC), 114-134 (VARD…LLWW), 147-167 (ALSW…LIPG), 193-213 (FLMA…DLFA), 223-243 (FLGV…HGLL), and 250-270 (TMTP…ATLG).

The protein belongs to the UppP family.

It is found in the cell inner membrane. The enzyme catalyses di-trans,octa-cis-undecaprenyl diphosphate + H2O = di-trans,octa-cis-undecaprenyl phosphate + phosphate + H(+). In terms of biological role, catalyzes the dephosphorylation of undecaprenyl diphosphate (UPP). Confers resistance to bacitracin. In Magnetococcus marinus (strain ATCC BAA-1437 / JCM 17883 / MC-1), this protein is Undecaprenyl-diphosphatase.